The sequence spans 128 residues: Small ribosomal subunit protein bS6 (128 aa).

This sequence belongs to the bacterial ribosomal protein bS6 family.

Its function is as follows. Binds together with bS18 to 16S ribosomal RNA. The protein is Small ribosomal subunit protein bS6 (rpsF) of Thermotoga maritima (strain ATCC 43589 / DSM 3109 / JCM 10099 / NBRC 100826 / MSB8).